The following is an 852-amino-acid chain: Disease resistance RPP13-like protein 4 (852 aa).

Residues Leu-17–Leu-68 adopt a coiled-coil conformation. ADP is bound by residues Arg-149, Val-161, Gly-189–Thr-196, Arg-297, and Lys-363. One can recognise an NB-ARC domain in the interval Glu-164–Glu-410. 6 LRR repeats span residues Cys-558–Glu-581, Leu-585–Leu-609, Phe-633–Leu-657, Leu-683–Ser-706, Leu-763–Asn-786, and Leu-798–Asn-824.

This sequence belongs to the disease resistance NB-LRR family. RPP13 subfamily. Interacts with ZED1/ZRK5. Component of a stable high-order oligomeric complex made of RKS1 and RPP13L4/ZAR1 which recruits ZED1-related kinases (e.g. uridylylated PBL2 and acetylated ZED1/ZRK5) in the presence of ATP and pathogenic bacteria type III secreted effector (T3SE) proteins (e.g. Pseudomonas syringae HopZ1a and HopF2a and Xanthomonas campestris pv. campestris (Xcc) XopAC/AvrAC) to form a wheel-like pentameric resistosome; this complex triggers immunity toward pathogenic bacteria (e.g. X.campestris and P.syringae), especially in vascular tissues. Interacts with RKS1, ZED1/ZRK5, ZRK3, ZRK6 and ZRK15.

It localises to the cell membrane. The protein resides in the nucleus. Its activity is regulated as follows. Exhibits autoinhibition activity. Its function is as follows. CC-NB-LRR receptor-like protein required for recognition of pathogenic bacteria type III effectors (T3E) such as Pseudomonas syringae HopZ1a and HopF2a and Xanthomonas campestris pv. campestris (Xcc) XopAC/AvrAC; this recognition requires ZED1-related kinases (e.g. PBL2, ZRK3 and ZED1/ZRK5). Confers allele-specific recognition and virulence attenuation of HopZ1a. Immunity mediated by RPP13L4/ZAR1 is independent of several genes required by other resistance protein signaling pathways such as NDR1 and RAR1. Together with ZED1/ZRK5, involved in the regulation of the ambient temperature-sensitive intersection of growth and immune response in the absence of pathogens. This chain is Disease resistance RPP13-like protein 4 (RPP13L4), found in Arabidopsis thaliana (Mouse-ear cress).